The sequence spans 371 residues: MSEICHRSNTRPVRVGNLTIGGSNELFIQSMCTTKTHDVEATVAEILRLEEAGCQIVRVAVPDERAADAIAEIKKRIHIPLVADIHFDYRLALKAIENGIDKVRINPGNIGRKEKVEAVVNAAKAKGIPIRIGVNAGSLERHILEKYGYPTADGMVESALHHIKILEDLDFHDIIVSMKASDVNLAIEAYEKAAKAFNYPLHLGITESGTLFAGTVKSAAGLGAILSKGIGNTLRISLSADPVEEIKVARELLKSFGLASNMATLISCPTCGRIEIDLISIANEVEEYISKLNVPLKVAVLGCAVNGPGEAREADIGIAGARGEGLLFMKGKTVRKVPEETMVEELKKEIDKLAAEMEEKRAAEEVQKANA.

Residues C268, C271, C303, and E310 each coordinate [4Fe-4S] cluster.

This sequence belongs to the IspG family. [4Fe-4S] cluster serves as cofactor.

It carries out the reaction (2E)-4-hydroxy-3-methylbut-2-enyl diphosphate + oxidized [flavodoxin] + H2O + 2 H(+) = 2-C-methyl-D-erythritol 2,4-cyclic diphosphate + reduced [flavodoxin]. Its pathway is isoprenoid biosynthesis; isopentenyl diphosphate biosynthesis via DXP pathway; isopentenyl diphosphate from 1-deoxy-D-xylulose 5-phosphate: step 5/6. Converts 2C-methyl-D-erythritol 2,4-cyclodiphosphate (ME-2,4cPP) into 1-hydroxy-2-methyl-2-(E)-butenyl 4-diphosphate. This Lysinibacillus sphaericus (strain C3-41) protein is 4-hydroxy-3-methylbut-2-en-1-yl diphosphate synthase (flavodoxin).